The primary structure comprises 274 residues: NAD kinase (274 aa).

The active-site Proton acceptor is Asp-61. Residues 61–62, Lys-66, 134–135, Lys-145, Asp-164, and 175–180 contribute to the NAD(+) site; these read DG, ND, and TAYSLS.

This sequence belongs to the NAD kinase family. It depends on a divalent metal cation as a cofactor.

It localises to the cytoplasm. The enzyme catalyses NAD(+) + ATP = ADP + NADP(+) + H(+). Functionally, involved in the regulation of the intracellular balance of NAD and NADP, and is a key enzyme in the biosynthesis of NADP. Catalyzes specifically the phosphorylation on 2'-hydroxyl of the adenosine moiety of NAD to yield NADP. The sequence is that of NAD kinase from Clostridium tetani (strain Massachusetts / E88).